A 141-amino-acid polypeptide reads, in one-letter code: Nucleoside diphosphate kinase (141 aa).

ATP contacts are provided by Lys-11, Phe-59, Arg-87, Thr-93, Arg-104, and Asn-114. His-117 serves as the catalytic Pros-phosphohistidine intermediate.

It belongs to the NDK family. Homotetramer. Requires Mg(2+) as cofactor.

It localises to the cytoplasm. It carries out the reaction a 2'-deoxyribonucleoside 5'-diphosphate + ATP = a 2'-deoxyribonucleoside 5'-triphosphate + ADP. The catalysed reaction is a ribonucleoside 5'-diphosphate + ATP = a ribonucleoside 5'-triphosphate + ADP. Major role in the synthesis of nucleoside triphosphates other than ATP. The ATP gamma phosphate is transferred to the NDP beta phosphate via a ping-pong mechanism, using a phosphorylated active-site intermediate. This chain is Nucleoside diphosphate kinase, found in Pseudomonas entomophila (strain L48).